The following is a 364-amino-acid chain: Uroporphyrinogen decarboxylase (364 aa).

Substrate-binding positions include 49-53 (RQAGR), Asp98, Tyr173, Ser228, and His341.

This sequence belongs to the uroporphyrinogen decarboxylase family. Homodimer.

It localises to the cytoplasm. It catalyses the reaction uroporphyrinogen III + 4 H(+) = coproporphyrinogen III + 4 CO2. It participates in porphyrin-containing compound metabolism; protoporphyrin-IX biosynthesis; coproporphyrinogen-III from 5-aminolevulinate: step 4/4. Functionally, catalyzes the decarboxylation of four acetate groups of uroporphyrinogen-III to yield coproporphyrinogen-III. This is Uroporphyrinogen decarboxylase from Protochlamydia amoebophila (strain UWE25).